Reading from the N-terminus, the 354-residue chain is Chorismate synthase (354 aa).

Arg-48 serves as a coordination point for NADP(+). FMN-binding positions include 125–127, Gly-277, 292–296, and Arg-318; these read RAS and KPIPS.

This sequence belongs to the chorismate synthase family. As to quaternary structure, homotetramer. FMNH2 is required as a cofactor.

The enzyme catalyses 5-O-(1-carboxyvinyl)-3-phosphoshikimate = chorismate + phosphate. Its pathway is metabolic intermediate biosynthesis; chorismate biosynthesis; chorismate from D-erythrose 4-phosphate and phosphoenolpyruvate: step 7/7. Functionally, catalyzes the anti-1,4-elimination of the C-3 phosphate and the C-6 proR hydrogen from 5-enolpyruvylshikimate-3-phosphate (EPSP) to yield chorismate, which is the branch point compound that serves as the starting substrate for the three terminal pathways of aromatic amino acid biosynthesis. This reaction introduces a second double bond into the aromatic ring system. The protein is Chorismate synthase of Nitratidesulfovibrio vulgaris (strain DP4) (Desulfovibrio vulgaris).